A 433-amino-acid chain; its full sequence is Delta-aminolevulinic acid dehydratase, chloroplastic (433 aa).

Residues 1–56 constitute a chloroplast transit peptide; the sequence is MASTFNIPCNAGTIKNFNNSQRNLGFSSNLGINFAKTRFSNCGDSGRIPSQLVVRA. A disordered region spans residues 83–115; it reads NAPSAPPVPPTPKAPSGTPSVSPLSLGRRPRRN. The span at 86–95 shows a compositional bias: pro residues; that stretch reads SAPPVPPTPK. Lys301 acts as the Schiff-base intermediate with substrate in catalysis. Positions 311 and 323 each coordinate 5-aminolevulinate. A Mg(2+)-binding site is contributed by Glu339. The active-site Schiff-base intermediate with substrate is Lys354. The 5-aminolevulinate site is built by Ser380 and Tyr419.

Belongs to the ALAD family. As to quaternary structure, homooctamer. The cofactor is Mg(2+).

Its subcellular location is the plastid. It localises to the chloroplast. It carries out the reaction 2 5-aminolevulinate = porphobilinogen + 2 H2O + H(+). Its pathway is porphyrin-containing compound metabolism; protoporphyrin-IX biosynthesis; coproporphyrinogen-III from 5-aminolevulinate: step 1/4. Functionally, catalyzes an early step in the biosynthesis of tetrapyrroles. Binds two molecules of 5-aminolevulinate per subunit, each at a distinct site, and catalyzes their condensation to form porphobilinogen. In Spinacia oleracea (Spinach), this protein is Delta-aminolevulinic acid dehydratase, chloroplastic (HEMB).